We begin with the raw amino-acid sequence, 208 residues long: MSLIHPDTAKYPFKFEPFLRQEYSFSLDPDRPICEFYNSREGPKSCPRGPLCPKKHVLPIFQNKIVCRHWLRGLCKKNDQCEYLHEYNLRKMPECVFFSKNGYCTQSPDCQYLHIDPASKIPKCENYEMGFCPLGSSCPRRHIKKVFCQRYMTGFCPLGKDECDMEHPQFIIPDEGSKLRIKRDDEINTRKMDEEKERRLNAIINGEV.

C3H1-type zinc fingers lie at residues 28–59 (DPDR…HVLP), 61–88 (FQNK…HEYN), 89–117 (LRKM…HIDP), 118–145 (ASKI…HIKK), and 147–170 (FCQR…HPQF).

This sequence belongs to the CPSF4/YTH1 family. As to quaternary structure, component of the cleavage and polyadenylation factor (CPF) complex, which is composed of at least PTI1, SYC1, SSU72, GLC7, MPE1, REF2, PFS2, PTA1, YSH1/BRR5, SWD2, CFT2/YDH1, YTH1, CFT1/YHH1, FIP1 and PAP1. Interacts with FIP1 and YSH1.

Its subcellular location is the nucleus. RNA-binding component of the cleavage and polyadenylation factor (CPF) complex, which plays a key role in polyadenylation-dependent pre-mRNA 3'-end formation and cooperates with cleavage factors including the CFIA complex and NAB4/CFIB. This is mRNA 3'-end-processing protein YTH1 (YTH1) from Saccharomyces cerevisiae (strain ATCC 204508 / S288c) (Baker's yeast).